A 674-amino-acid polypeptide reads, in one-letter code: DNA ligase (674 aa).

NAD(+)-binding positions include 35-39 (DAEYD), 84-85 (SL), and E116. K118 functions as the N6-AMP-lysine intermediate in the catalytic mechanism. NAD(+)-binding residues include R139, E176, K293, and K317. Zn(2+)-binding residues include C411, C414, C429, and C435. The 82-residue stretch at 593–674 (DGVKPLEGTT…LLALLEEHGV (82 aa)) folds into the BRCT domain.

Belongs to the NAD-dependent DNA ligase family. LigA subfamily. Mg(2+) serves as cofactor. It depends on Mn(2+) as a cofactor.

The enzyme catalyses NAD(+) + (deoxyribonucleotide)n-3'-hydroxyl + 5'-phospho-(deoxyribonucleotide)m = (deoxyribonucleotide)n+m + AMP + beta-nicotinamide D-nucleotide.. DNA ligase that catalyzes the formation of phosphodiester linkages between 5'-phosphoryl and 3'-hydroxyl groups in double-stranded DNA using NAD as a coenzyme and as the energy source for the reaction. It is essential for DNA replication and repair of damaged DNA. This is DNA ligase from Saccharophagus degradans (strain 2-40 / ATCC 43961 / DSM 17024).